The primary structure comprises 234 residues: Conidial surface nicotinamide adenine dinucleotide glycohydrolase nadA (234 aa).

Residues methionine 1–serine 20 form the signal peptide. Residues leucine 21 to glycine 117 form a thump region. 2 disulfides stabilise this stretch: cysteine 33–cysteine 80 and cysteine 38–cysteine 50. Asparagine 45, asparagine 95, and asparagine 118 each carry an N-linked (GlcNAc...) asparagine glycan. The TNT domain maps to threonine 120 to arginine 212. Arginine 129 is a catalytic residue. Phenylalanine 130, threonine 136, and arginine 148 together coordinate NAD(+). Glutamine 194 is a catalytic residue. Serine 216, aspartate 219, glutamate 220, and glutamate 223 together coordinate Ca(2+).

Belongs to the fungal surface NADase family. Homodimer. In terms of processing, N-glycosylated.

It localises to the secreted. It catalyses the reaction NAD(+) + H2O = ADP-D-ribose + nicotinamide + H(+). The enzyme catalyses NADP(+) + H2O = ADP-D-ribose 2'-phosphate + nicotinamide + H(+). The catalytic activity is positively regulated by calcium via its binding to the calcium-binding site. In terms of biological role, conidial surface nicotinamide adenine dinucleotide glycohydrolase that cleave NAD(+) and NADP(+) but not their reduced counterparts, NADH and NADPH. Lacks both ADP-ribosyl cyclase and base exchange activity and does not mediate synthesis of calcium messengers cADPR or NAADP. Plays a role in pathogenicity by depleting the host's NAD(+) pool. The chain is Conidial surface nicotinamide adenine dinucleotide glycohydrolase nadA from Aspergillus fumigatus (strain ATCC MYA-4609 / CBS 101355 / FGSC A1100 / Af293) (Neosartorya fumigata).